The chain runs to 71 residues: uncharacterized protein (71 aa).

This is an uncharacterized protein from Thermoproteus tenax virus 1 (strain KRA1) (TTV1).